Reading from the N-terminus, the 442-residue chain is UDP-glycosyltransferase 79B8 (442 aa).

UDP-alpha-D-glucose-binding positions include S260, 319-321 (VQQ), 336-344 (HCGPGTIWE), and 358-361 (LGDQ).

This sequence belongs to the UDP-glycosyltransferase family.

This Arabidopsis thaliana (Mouse-ear cress) protein is UDP-glycosyltransferase 79B8 (UGT79B8).